A 313-amino-acid polypeptide reads, in one-letter code: Putative S-adenosyl-L-methionine-dependent methyltransferase MAV_4573 (313 aa).

S-adenosyl-L-methionine contacts are provided by residues D129 and 158-159; that span reads DL.

It belongs to the UPF0677 family.

Its function is as follows. Exhibits S-adenosyl-L-methionine-dependent methyltransferase activity. This is Putative S-adenosyl-L-methionine-dependent methyltransferase MAV_4573 from Mycobacterium avium (strain 104).